Here is a 451-residue protein sequence, read N- to C-terminus: Probable DNA polymerase delta small subunit (451 aa).

This sequence belongs to the DNA polymerase delta/II small subunit family. In terms of assembly, heterodimer with subunits of 125 kDa and 50 kDa.

It is found in the nucleus. The enzyme catalyses DNA(n) + a 2'-deoxyribonucleoside 5'-triphosphate = DNA(n+1) + diphosphate. Functionally, the function of the small subunit is not yet clear. The sequence is that of Probable DNA polymerase delta small subunit from Caenorhabditis elegans.